The chain runs to 135 residues: ATP synthase epsilon chain (135 aa).

It belongs to the ATPase epsilon chain family. As to quaternary structure, F-type ATPases have 2 components, CF(1) - the catalytic core - and CF(0) - the membrane proton channel. CF(1) has five subunits: alpha(3), beta(3), gamma(1), delta(1), epsilon(1). CF(0) has three main subunits: a, b and c.

The protein localises to the cell inner membrane. Its function is as follows. Produces ATP from ADP in the presence of a proton gradient across the membrane. This chain is ATP synthase epsilon chain, found in Allorhizobium ampelinum (strain ATCC BAA-846 / DSM 112012 / S4) (Agrobacterium vitis (strain S4)).